A 111-amino-acid chain; its full sequence is Cornifelin (111 aa).

This sequence belongs to the cornifelin family. As to quaternary structure, directly or indirectly cross-linked to CE proteins loricin and involucrin (IVL).

Its subcellular location is the cytoplasm. In terms of biological role, part of the insoluble cornified cell envelope (CE) of stratified squamous epithelia. The protein is Cornifelin (Cnfn) of Mus musculus (Mouse).